The chain runs to 493 residues: Glycosyltransferase alg8 (493 aa).

Helical transmembrane passes span 13–32 (GWLF…PTSI), 47–69 (VGIW…LYIV), 380–402 (LTVA…LLWI), and 422–444 (PAYP…YVFF).

The protein belongs to the glycosyltransferase 2 family.

It is found in the cell membrane. It participates in glycan biosynthesis; alginate biosynthesis. Possibly a processive enzyme that polymerizes GDP-mannuronic acid. The chain is Glycosyltransferase alg8 (alg8) from Pseudomonas syringae pv. tomato (strain ATCC BAA-871 / DC3000).